Here is a 507-residue protein sequence, read N- to C-terminus: GMP synthase [glutamine-hydrolyzing] (507 aa).

Positions 4 to 193 (KIIILDFGSQ…VVDVCGCKQD (190 aa)) constitute a Glutamine amidotransferase type-1 domain. Cysteine 79 acts as the Nucleophile in catalysis. Residues histidine 167 and glutamate 169 contribute to the active site. The region spanning 194 to 382 (WSPASFIEST…LGMPEHLITR (189 aa)) is the GMPS ATP-PPase domain. 221–227 (SGGVDSS) contacts ATP.

Homodimer.

It catalyses the reaction XMP + L-glutamine + ATP + H2O = GMP + L-glutamate + AMP + diphosphate + 2 H(+). Its pathway is purine metabolism; GMP biosynthesis; GMP from XMP (L-Gln route): step 1/1. Catalyzes the synthesis of GMP from XMP. This Bacteroides fragilis (strain ATCC 25285 / DSM 2151 / CCUG 4856 / JCM 11019 / LMG 10263 / NCTC 9343 / Onslow / VPI 2553 / EN-2) protein is GMP synthase [glutamine-hydrolyzing].